Reading from the N-terminus, the 514-residue chain is Pantothenate transporter liz1 (514 aa).

A run of 12 helical transmembrane segments spans residues 24 to 44, 72 to 92, 98 to 118, 128 to 148, 159 to 179, 194 to 214, 263 to 283, 300 to 320, 329 to 349, 357 to 377, 390 to 410, and 423 to 443; these read LLIK…FINY, INVV…YALQ, LWFS…FAVH, FFMA…LGAW, GIFS…QTAV, WLFI…LFLF, GLCI…NVLM, NYPT…SVIS, WPFG…LLAW, FFAY…FSWA, VVVF…APIM, and LIGL…VSYM.

This sequence belongs to the major facilitator superfamily. Allantoate permease family.

It is found in the cell membrane. Transports pantothenate into the cell. This chain is Pantothenate transporter liz1 (liz1), found in Schizosaccharomyces pombe (strain 972 / ATCC 24843) (Fission yeast).